The following is a 562-amino-acid chain: Dihydroxy-acid dehydratase 2 (562 aa).

Position 50 (Cys-50) interacts with [2Fe-2S] cluster. Asp-82 is a binding site for Mg(2+). Residue Cys-123 coordinates [2Fe-2S] cluster. Positions 124, 125, and 447 each coordinate Mg(2+). Lys-125 is modified (N6-carboxylysine). The active-site Proton acceptor is the Ser-473.

Belongs to the IlvD/Edd family. In terms of assembly, homodimer. [2Fe-2S] cluster serves as cofactor. It depends on Mg(2+) as a cofactor.

The catalysed reaction is (2R)-2,3-dihydroxy-3-methylbutanoate = 3-methyl-2-oxobutanoate + H2O. It carries out the reaction (2R,3R)-2,3-dihydroxy-3-methylpentanoate = (S)-3-methyl-2-oxopentanoate + H2O. It functions in the pathway amino-acid biosynthesis; L-isoleucine biosynthesis; L-isoleucine from 2-oxobutanoate: step 3/4. The protein operates within amino-acid biosynthesis; L-valine biosynthesis; L-valine from pyruvate: step 3/4. In terms of biological role, functions in the biosynthesis of branched-chain amino acids. Catalyzes the dehydration of (2R,3R)-2,3-dihydroxy-3-methylpentanoate (2,3-dihydroxy-3-methylvalerate) into 2-oxo-3-methylpentanoate (2-oxo-3-methylvalerate) and of (2R)-2,3-dihydroxy-3-methylbutanoate (2,3-dihydroxyisovalerate) into 2-oxo-3-methylbutanoate (2-oxoisovalerate), the penultimate precursor to L-isoleucine and L-valine, respectively. The protein is Dihydroxy-acid dehydratase 2 of Bordetella pertussis (strain Tohama I / ATCC BAA-589 / NCTC 13251).